Here is a 172-residue protein sequence, read N- to C-terminus: Signal peptidase complex catalytic subunit SEC11 (172 aa).

The Cytoplasmic portion of the chain corresponds to 1-14 (MLSGLQNPRQAAAQ). Residues 15–35 (LMNFALILSTAFMMWKGLSVA) form a helical; Signal-anchor for type II membrane protein membrane-spanning segment. At 36-172 (TDSPSPIVVV…MGLLVVIQRE (137 aa)) the chain is on the lumenal side. Catalysis depends on charge relay system residues serine 49, histidine 90, and aspartate 115. Residues 158-169 (VMLGIMGLLVVI) are C-terminal short (CTS) helix.

Belongs to the peptidase S26B family. Component of the signal peptidase complex (SPC) composed of a catalytic subunit SEC11 and three accessory subunits SPC1, SPC2 and SPC3. The complex induces a local thinning of the ER membrane which is used to measure the length of the signal peptide (SP) h-region of protein substrates. This ensures the selectivity of the complex towards h-regions shorter than 18-20 amino acids. SPC associates with the translocon complex.

The protein resides in the endoplasmic reticulum membrane. The enzyme catalyses Cleavage of hydrophobic, N-terminal signal or leader sequences from secreted and periplasmic proteins.. Its function is as follows. Catalytic component of the signal peptidase complex (SPC) which catalyzes the cleavage of N-terminal signal sequences from nascent proteins as they are translocated into the lumen of the endoplasmic reticulum. Specifically cleaves N-terminal signal peptides that contain a hydrophobic alpha-helix (h-region) shorter than 18-20 amino acids. This Metarhizium acridum (strain CQMa 102) protein is Signal peptidase complex catalytic subunit SEC11 (SEC11).